The sequence spans 473 residues: Methionine aminopeptidase 2 (473 aa).

The interval 23-121 (LAEDSSNGTQ…KLVSIDQSYP (99 aa)) is disordered. Residues 41 to 53 (KATTAVGQDNGNN) show a composition bias toward polar residues. The segment covering 73–83 (DDDDDDEDDDV) has biased composition (acidic residues). Low complexity predominate over residues 84 to 93 (AAAAAAVGDA). Over residues 97 to 113 (KKKKKKKSSNKKKKKKL) the composition is skewed to basic residues. H224 is a substrate binding site. Residues D244, D255, and H326 each coordinate a divalent metal cation. H334 contacts substrate. Residues E359 and E454 each coordinate a divalent metal cation.

This sequence belongs to the peptidase M24A family. Methionine aminopeptidase eukaryotic type 2 subfamily. Co(2+) serves as cofactor. It depends on Zn(2+) as a cofactor. Requires Mn(2+) as cofactor. Fe(2+) is required as a cofactor.

It is found in the cytoplasm. The catalysed reaction is Release of N-terminal amino acids, preferentially methionine, from peptides and arylamides.. Functionally, cotranslationally removes the N-terminal methionine from nascent proteins. The N-terminal methionine is often cleaved when the second residue in the primary sequence is small and uncharged (Met-Ala-, Cys, Gly, Pro, Ser, Thr, or Val). The polypeptide is Methionine aminopeptidase 2 (Lodderomyces elongisporus (strain ATCC 11503 / CBS 2605 / JCM 1781 / NBRC 1676 / NRRL YB-4239) (Yeast)).